Reading from the N-terminus, the 101-residue chain is Small ribosomal subunit protein uS14 (101 aa).

It belongs to the universal ribosomal protein uS14 family. Part of the 30S ribosomal subunit. Contacts proteins S3 and S10.

Functionally, binds 16S rRNA, required for the assembly of 30S particles and may also be responsible for determining the conformation of the 16S rRNA at the A site. This chain is Small ribosomal subunit protein uS14, found in Burkholderia lata (strain ATCC 17760 / DSM 23089 / LMG 22485 / NCIMB 9086 / R18194 / 383).